Here is a 154-residue protein sequence, read N- to C-terminus: Ribosomal RNA large subunit methyltransferase H (154 aa).

S-adenosyl-L-methionine-binding positions include leucine 70, glycine 102, and 121–126 (LSRMTL).

This sequence belongs to the RNA methyltransferase RlmH family. In terms of assembly, homodimer.

It localises to the cytoplasm. The enzyme catalyses pseudouridine(1915) in 23S rRNA + S-adenosyl-L-methionine = N(3)-methylpseudouridine(1915) in 23S rRNA + S-adenosyl-L-homocysteine + H(+). Its function is as follows. Specifically methylates the pseudouridine at position 1915 (m3Psi1915) in 23S rRNA. The chain is Ribosomal RNA large subunit methyltransferase H from Citrifermentans bemidjiense (strain ATCC BAA-1014 / DSM 16622 / JCM 12645 / Bem) (Geobacter bemidjiensis).